An 834-amino-acid polypeptide reads, in one-letter code: MIPQSNPTAQRRSGDAQNTNNVAPNSVATTTDTALTASTQSGSSSNNANKKLEYIGVYKIGPEIGKGSFATVYKCIDTTNNKAVAIKSVYRSKLKSKKLLENLEIEIQILKSMKHPHIVGLLDYKQTTSYFHLVMDYCSMGDLSYFIRRRNNLVKSHPVISSLLHCYPSPEGSHGLNEVLVLHFLRQLSSALQFLRDKSLVHRDIKPQNLLLCPPVHSKQEFIDGEFVGMWELPILKIADFGFARFLPSTSMAETLCGSPLYMAPEILRYEKYNAKADLWSVGAVLYEMTVGKPPFKAGNHIELLKNIEKANDKIKFPSAAQVPEPLKQLIRSLLKYNPTERISFNEFFNDSLITCDLDDNDQPLETSQMDENLFISEYISPIAPAERSQFFKEQKKNDSVVRSPSPTTATTATPRQDNVVQQMTKITSPVPDDFALSIARNSSEFNLKKDDMNLEKDYVVVEKRAVEVNALADELAHAGAGADAIPNSRKNSDVDQTNRLASSQQQTETASYRRSSSSGSQKRPSFSERRISLSLSPTNALTKAIGLASNRLFGLTTNSSHSNVSAIAEDDDSSTSNNDASSFSTVIPSTNNHVLLQKLNLATIGEPGTEFDLGSVSNLDEQILDKLELIANIANAVNLYADVKFSQIIPSPPSSDGIEDDTEMLPPKIIHMISQEGIGLYIKTLSLLGRAMDIAGQWWFEKYDAVHGERPSFETTVRINQIVQWIREKYNISLERLEFLKSKSDFTAEETIEDNEPNGTTRVQQAIFAAALGIARETALKELLRNSTDIECSYVTSIYMLLAILEDLEESDRQEVKKIIEKINSRLKNFMGK.

The segment at 1 to 27 (MIPQSNPTAQRRSGDAQNTNNVAPNSV) is disordered. The Protein kinase domain maps to 58–354 (YKIGPEIGKG…FNEFFNDSLI (297 aa)). Residues 64–72 (IGKGSFATV) and Lys87 each bind ATP. Asp204 serves as the catalytic Proton acceptor. Disordered stretches follow at residues 394–417 (EQKK…TPRQ) and 483–532 (ADAI…ERRI). The segment covering 401-416 (VVRSPSPTTATTATPR) has biased composition (low complexity). Polar residues predominate over residues 495–511 (VDQTNRLASSQQQTETA). The segment covering 513 to 525 (YRRSSSSGSQKRP) has biased composition (low complexity).

The protein belongs to the protein kinase superfamily. Ser/Thr protein kinase family. APG1/unc-51/ULK1 subfamily. As to quaternary structure, homodimer. Forms a ternary complex with ATG13 and ATG17.

The protein localises to the cytoplasm. Its subcellular location is the preautophagosomal structure membrane. The enzyme catalyses L-seryl-[protein] + ATP = O-phospho-L-seryl-[protein] + ADP + H(+). The catalysed reaction is L-threonyl-[protein] + ATP = O-phospho-L-threonyl-[protein] + ADP + H(+). Its function is as follows. Serine/threonine protein kinase involved in the cytoplasm to vacuole transport (Cvt) and found to be essential in autophagy, where it is required for the formation of autophagosomes. Involved in the clearance of protein aggregates which cannot be efficiently cleared by the proteasome. Required for selective autophagic degradation of the nucleus (nucleophagy) as well as for mitophagy which contributes to regulate mitochondrial quantity and quality by eliminating the mitochondria to a basal level to fulfill cellular energy requirements and preventing excess ROS production. Also involved in endoplasmic reticulum-specific autophagic process, in selective removal of ER-associated degradation (ERAD) substrates. Plays a key role in ATG9 and ATG23 cycling through the pre-autophagosomal structure and is necessary to promote ATG18 binding to ATG9 through phosphorylation of ATG9. Catalyzes phosphorylation of ATG4, decreasing the interaction between ATG4 and ATG8 and impairing deconjugation of PE-conjugated forms of ATG8. The polypeptide is Serine/threonine-protein kinase ATG1 (ATG1) (Candida albicans (strain SC5314 / ATCC MYA-2876) (Yeast)).